The chain runs to 259 residues: UPF0246 protein Rfer_2372 (259 aa).

It belongs to the UPF0246 family.

This Albidiferax ferrireducens (strain ATCC BAA-621 / DSM 15236 / T118) (Rhodoferax ferrireducens) protein is UPF0246 protein Rfer_2372.